The sequence spans 130 residues: Cholecystokinin (130 aa).

Positions 1-20 are cleaved as a signal peptide; the sequence is MYSGICIYMFLAMLSTSSSG. The propeptide occupies 21–60; the sequence is QQATGSHNENPVATELEQSLTEHHRHVRVPSSAGQLKPIQ. Tyr112 is modified (sulfotyrosine). At Phe118 the chain carries Phenylalanine amide. A propeptide spanning residues 122–130 is cleaved from the precursor; the sequence is SAEEYEYSS. A sulfotyrosine mark is found at Tyr126 and Tyr128.

This sequence belongs to the gastrin/cholecystokinin family. The precursor is cleaved by proteases to produce a number of active cholecystokinins. As to expression, expressed in brain, duodenum and small intestine.

The protein localises to the secreted. Functionally, this peptide hormone induces gall bladder contraction and the release of pancreatic enzymes in the gut. Its function in the brain is not clear. The protein is Cholecystokinin of Trachemys scripta (Red-eared slider turtle).